A 506-amino-acid polypeptide reads, in one-letter code: Tyrosine-protein phosphatase non-receptor type substrate 1 (506 aa).

The N-terminal stretch at 1-29 (MEPARPAPGRLRPLLCLLLAASNAWTGTA) is a signal peptide. One can recognise an Ig-like V-type domain in the interval 30-145 (GDGELQVIQP…SGPGTHLTVS (116 aa)). At 30 to 371 (GDGELQVIQP…PGPNDSNWTS (342 aa)) the chain is on the extracellular side. A disulfide bridge links cysteine 55 with cysteine 121. Asparagine 92 carries an N-linked (GlcNAc...) asparagine glycan. Residues 136-159 (SGPGTHLTVSAKPSPPVLSGPTVR) are disordered. Ig-like C1-type domains lie at 148–248 (PSPP…ANLS) and 255–348 (PTLE…HTLE). Residues asparagine 167, asparagine 179, asparagine 204, asparagine 210, asparagine 246, asparagine 270, asparagine 292, asparagine 311, asparagine 319, asparagine 344, asparagine 365, and asparagine 368 are each glycosylated (N-linked (GlcNAc...) asparagine). Cysteine 170 and cysteine 228 are oxidised to a cystine. Residues cysteine 273 and cysteine 331 are joined by a disulfide bond. Residues 344 to 364 (NHTLEVSAPQKDQDTGQTPGP) are disordered. The chain crosses the membrane as a helical span at residues 372 to 392 (IFIVVGVVCALLVALLIAALY). At 393–506 (LLRIRQNKAK…EYASVQVQRK (114 aa)) the chain is on the cytoplasmic side. Positions 402–468 (KGSTSSTRLH…QARPPPVSED (67 aa)) are disordered. Over residues 409 to 418 (RLHEPEKNTR) the composition is skewed to basic and acidic residues. Over residues 419 to 429 (ETTQIQDNNDI) the composition is skewed to polar residues. Phosphotyrosine; by Tyr-kinases is present on tyrosine 431. The SH2-binding motif lies at 432–435 (ADLN). Residues 441-446 (KSTPKA) carry the SH3-binding motif. The span at 444–456 (PKANEPNNHTEYA) shows a compositional bias: polar residues. A phosphotyrosine; by Tyr-kinases mark is found at tyrosine 455, tyrosine 472, and tyrosine 498. 3 short sequence motifs (SH2-binding) span residues 455–458 (YASI), 472–475 (YADL), and 498–501 (YASV). Positions 480 to 506 (LNRTPKQPAPKPEPSYSEYASVQVQRK) are disordered. Over residues 497-506 (EYASVQVQRK) the composition is skewed to polar residues.

As to quaternary structure, binds PTPN11 when tyrosine-phosphorylated, except in macrophages, where it primarily binds PTPN6. Binds GRB2 in vitro. Binds JAK2 irrespective of its phosphorylation status and forms a stable complex. Binds SCAP1 and/or SCAP2. The resulting complex recruits FYB1. Binds FGR and PTK2B. Interacts with TRIM2. Phosphorylated on tyrosine residues. In terms of tissue distribution, highly expressed in spleen macrophages. Detected in skin dendritic cells.

The protein localises to the membrane. In terms of biological role, immunoglobulin-like cell surface receptor for CD47. Acts as docking protein and induces translocation of PTPN6, PTPN11 and other binding partners from the cytosol to the plasma membrane. Supports adhesion of cerebellar neurons, neurite outgrowth and glial cell attachment. May play a key role in intracellular signaling during synaptogenesis and in synaptic function. Involved in the negative regulation of receptor tyrosine kinase-coupled cellular responses induced by cell adhesion, growth factors or insulin. Mediates negative regulation of phagocytosis, mast cell activation and dendritic cell activation. CD47 binding prevents maturation of immature dendritic cells and inhibits cytokine production by mature dendritic cells. Plays a role in antiviral immunity and limits new world arenavirus infection by decreasing virus internalization. Receptor for THBS1. Interaction with THBS1 stimulates phosphorylation of SIRPA. In response to THBS1, involved in ROS signaling in non-phagocytic cells, stimulating NADPH oxidase-derived ROS production. This is Tyrosine-protein phosphatase non-receptor type substrate 1 (SIRPA) from Bos taurus (Bovine).